A 114-amino-acid polypeptide reads, in one-letter code: Iron-sulfur cluster insertion protein ErpA (114 aa).

Residues Cys-42, Cys-106, and Cys-108 each contribute to the iron-sulfur cluster site.

The protein belongs to the HesB/IscA family. In terms of assembly, homodimer. Iron-sulfur cluster is required as a cofactor.

Required for insertion of 4Fe-4S clusters for at least IspG. The polypeptide is Iron-sulfur cluster insertion protein ErpA (Haemophilus influenzae (strain PittGG)).